Consider the following 130-residue polypeptide: Protein TraH (130 aa).

The segment at Met1 to Ala78 is disordered. Residues Pro37–Pro54 are compositionally biased toward low complexity.

The initiation process of transfer DNA synthesis requires the interaction of at least three plasmid-specific components (TraH, TraI, and TraJ) at the transfer origin resulting in the assembly of a specialized nucleoprotein complex - the relaxosome. In Escherichia coli, this protein is Protein TraH (traH).